Here is a 335-residue protein sequence, read N- to C-terminus: Methionine import ATP-binding protein MetN 1 (335 aa).

One can recognise an ABC transporter domain in the interval 2 to 242 (IEFHNVHKTY…PQHATTRRFV (241 aa)). 38-45 (GHSGAGKS) serves as a coordination point for ATP.

It belongs to the ABC transporter superfamily. Methionine importer (TC 3.A.1.24) family. As to quaternary structure, the complex is composed of two ATP-binding proteins (MetN), two transmembrane proteins (MetI) and a solute-binding protein (MetQ).

Its subcellular location is the cell inner membrane. It catalyses the reaction L-methionine(out) + ATP + H2O = L-methionine(in) + ADP + phosphate + H(+). It carries out the reaction D-methionine(out) + ATP + H2O = D-methionine(in) + ADP + phosphate + H(+). Functionally, part of the ABC transporter complex MetNIQ involved in methionine import. Responsible for energy coupling to the transport system. This is Methionine import ATP-binding protein MetN 1 from Pseudomonas syringae pv. syringae (strain B728a).